The primary structure comprises 291 residues: tRNA dimethylallyltransferase (291 aa).

Gly5 to Ser12 contributes to the ATP binding site. Residue Thr7 to Ser12 coordinates substrate. The interaction with substrate tRNA stretch occupies residues Asp30–Gln33.

Belongs to the IPP transferase family. Monomer. Mg(2+) serves as cofactor.

It carries out the reaction adenosine(37) in tRNA + dimethylallyl diphosphate = N(6)-dimethylallyladenosine(37) in tRNA + diphosphate. Its function is as follows. Catalyzes the transfer of a dimethylallyl group onto the adenine at position 37 in tRNAs that read codons beginning with uridine, leading to the formation of N6-(dimethylallyl)adenosine (i(6)A). The protein is tRNA dimethylallyltransferase of Frankia casuarinae (strain DSM 45818 / CECT 9043 / HFP020203 / CcI3).